The sequence spans 152 residues: Ribonuclease pancreatic (152 aa).

A signal peptide spans 1-24 (MALDKSVILLPLLVLVLLVLGCLG). The substrate site is built by Lys-31 and Arg-34. His-36 (proton acceptor) is an active-site residue. Asn-46 carries an N-linked (GlcNAc...) asparagine glycan. Disulfide bonds link Cys-50/Cys-108, Cys-64/Cys-119, Cys-82/Cys-134, and Cys-89/Cys-96. Residues 65–69 (KPVNT), Lys-90, and Arg-109 each bind substrate. A glycan (N-linked (GlcNAc...) asparagine) is linked at Asn-112. His-143 (proton donor) is an active-site residue.

The protein belongs to the pancreatic ribonuclease family. In terms of assembly, monomer. Interacts with and forms tight 1:1 complexes with RNH1. Dimerization of two such complexes may occur. Interaction with RNH1 inhibits this protein.

It localises to the secreted. The catalysed reaction is an [RNA] containing cytidine + H2O = an [RNA]-3'-cytidine-3'-phosphate + a 5'-hydroxy-ribonucleotide-3'-[RNA].. The enzyme catalyses an [RNA] containing uridine + H2O = an [RNA]-3'-uridine-3'-phosphate + a 5'-hydroxy-ribonucleotide-3'-[RNA].. Functionally, endonuclease that catalyzes the cleavage of RNA on the 3' side of pyrimidine nucleotides. Acts on single-stranded and double-stranded RNA. This is Ribonuclease pancreatic (RNASE1) from Papio hamadryas (Hamadryas baboon).